The primary structure comprises 24 residues: GLLTNVLGFLKKAGKGVLSGLLPL.

In terms of tissue distribution, expressed by the skin glands.

The protein resides in the secreted. Functionally, has antibacterial and antifungal activity. This is Caerulein precursor fragment B4 from Xenopus borealis (Kenyan clawed frog).